Here is a 119-residue protein sequence, read N- to C-terminus: Ig heavy chain V region T601 (119 aa).

Residues 1–112 (EVKLLESGGG…GYFDVWGAGT (112 aa)) form the Ig-like domain.

In Mus musculus (Mouse), this protein is Ig heavy chain V region T601.